Here is an 84-residue protein sequence, read N- to C-terminus: Alpha-like toxin BmK M1 (84 aa).

Positions 1–19 (MNYLVMISFALLLMTGVES) are cleaved as a signal peptide. The 63-residue stretch at 21 to 83 (RDAYIAKPHN…VPIRVPGKCH (63 aa)) folds into the LCN-type CS-alpha/beta domain. Cystine bridges form between cysteine 31–cysteine 82, cysteine 35–cysteine 55, cysteine 41–cysteine 65, and cysteine 45–cysteine 67. Position 84 (arginine 84) is a propeptide, removed by a carboxypeptidase.

This sequence belongs to the long (4 C-C) scorpion toxin superfamily. Sodium channel inhibitor family. Alpha subfamily. Expressed by the venom gland.

It is found in the secreted. In terms of biological role, alpha toxins bind voltage-independently at site-3 of sodium channels (Nav) and inhibit the inactivation of the activated channels thereby blocking neuronal transmission. This toxin is active against both mammals and insects, and is classified as an alpha-like toxin. It is active on Nav1.2/SCN2A (EC(50)=139-252 nM), Nav1.3/SCN3A (EC(50)=565 nM), Nav1.4/SCN4A and Nav1.5/SCN5A (EC(50)=195-500 nM), Nav1.6/SCN8A (EC(50)=214 nM), and drosophila DmNav1 (EC(50)=30 nM). In mNav1.6/SCN8A, the toxin induces a large increase in both transient and persistent currents, which correlates with a prominent reduction in the fast component of inactivating current. In rNav1.2/SCN2A and rNav1.3/SCN3A, toxin-increased currents is much smaller. Moreover, the toxin only accelerates the slow inactivation development and delay recovery of mNav1.6/SCN8A through binding to the channel in the open state. Is 6-fold more toxic than BmK-M2. In vivo, intrahippocampal injection into rat induces epileptiform responses. In addition, intraplantar injection into rat induces spontaneous nociception and hyperalgesia. The protein is Alpha-like toxin BmK M1 of Olivierus martensii (Manchurian scorpion).